Consider the following 494-residue polypeptide: MTTSELPARTSPTPDVRNGIDYKVADLTLAEFGRKEIRLAEHEMPGLMALRREYADVQPLKGARISGSLHMTVQTAVLIETLTALGAQVRWASCNIFSTQDHAAAAVVVGPHGTVEEPKGVSVFAWKGETLEEYWWAAEQMLTWPGEPANMILDDGGDATMLVLRGAQFEKAGVVPPEDADHSAEYKVFLNLLRERFETDRGKWTAIAESVRGVTEETTTGVLRLYQFAAAGELVFPAINVNDSVTKSKFDNKYGTRHSLIDGINRGTDVLIGGKKVLICGYGDVGKGCAESLAGQGARVQVTEIDPINALQALMDGYDVVTVEQAIGEADIVITATGNKDIITLDHMKAMKDQAILGNIGHFDNEIDMAALERSGATRLTIKPQVDLWTFGESGKSIIVLSEGRLLNLGNATGHPSFVMSNSFSNQVIAQIELWTKPEEYDNEVYRLPKHLDEKVARIHVEALGGTLTKLTKDQAEYIGVDVEGPYKPEHYRY.

Positions 72, 155, and 217 each coordinate substrate. 218 to 220 (TTT) lines the NAD(+) pocket. Residues Lys247 and Asp251 each coordinate substrate. Residues Asn252, 281-286 (GYGDVG), Glu304, Asn339, 360-362 (IGH), and Asn408 contribute to the NAD(+) site.

Belongs to the adenosylhomocysteinase family. It depends on NAD(+) as a cofactor.

Its subcellular location is the cytoplasm. The catalysed reaction is S-adenosyl-L-homocysteine + H2O = L-homocysteine + adenosine. It functions in the pathway amino-acid biosynthesis; L-homocysteine biosynthesis; L-homocysteine from S-adenosyl-L-homocysteine: step 1/1. Functionally, may play a key role in the regulation of the intracellular concentration of adenosylhomocysteine. The polypeptide is Adenosylhomocysteinase (Nocardia farcinica (strain IFM 10152)).